Reading from the N-terminus, the 840-residue chain is Radial spoke head 10 homolog B (840 aa).

2 stretches are compositionally biased toward basic and acidic residues: residues 1 to 16 (MVKE…DKSA) and 51 to 63 (QPKD…EVKS). Residues 1-74 (MVKEKKKADK…SLPNEDTTQY (74 aa)) form a disordered region. MORN repeat units follow at residues 86 to 108 (SYEG…QGGC), 109 to 131 (TYQG…ADGL), 132 to 154 (KYEG…PDGS), 155 to 177 (TYEG…STQP), 179 to 201 (SYIG…NQEG), 204 to 226 (WYEG…KSGN), 227 to 249 (IYEG…LTTN), 251 to 273 (EYTG…FLKR), 284 to 306 (EYVG…ASGA), and 307 to 329 (MYEG…KNGR). Positions 758 to 801 (KEKVKENRLHNEAMALQRKMENEELEARLNSLREEEAKRQDYEV) form a coiled coil. The tract at residues 810–840 (VDAPSSSFTPSPPKEDTVVSSKSITSKKKKK) is disordered.

As to quaternary structure, interacts with RSPH6A. Does not appear to be part of the axonemal radial spoke complexes 1 or 2.

The protein resides in the cytoplasm. The protein localises to the cytoskeleton. Its subcellular location is the cilium axoneme. It is found in the cell projection. It localises to the cilium. The protein resides in the flagellum. In terms of biological role, may function as part of the axonemal radial spoke complex 3 (RS3). Radial spoke complexes are important for ciliary motility. The protein is Radial spoke head 10 homolog B (RSPH10B) of Bos taurus (Bovine).